The chain runs to 324 residues: Glyoxylate/hydroxypyruvate reductase B (324 aa).

Active-site residues include Arg237 and Glu266. His285 serves as the catalytic Proton donor.

This sequence belongs to the D-isomer specific 2-hydroxyacid dehydrogenase family. GhrB subfamily. In terms of assembly, homodimer.

It localises to the cytoplasm. The catalysed reaction is glycolate + NADP(+) = glyoxylate + NADPH + H(+). It catalyses the reaction (R)-glycerate + NAD(+) = 3-hydroxypyruvate + NADH + H(+). The enzyme catalyses (R)-glycerate + NADP(+) = 3-hydroxypyruvate + NADPH + H(+). Its function is as follows. Catalyzes the NADPH-dependent reduction of glyoxylate and hydroxypyruvate into glycolate and glycerate, respectively. This chain is Glyoxylate/hydroxypyruvate reductase B, found in Salmonella gallinarum (strain 287/91 / NCTC 13346).